The sequence spans 582 residues: ATP-dependent lipid A-core flippase (582 aa).

A run of 5 helical transmembrane segments spans residues 16-36 (LWPTIAPFKAGLIVAGVALIL), 63-83 (VLVWMPLVVIGLMILRGITSY), 153-173 (IIGLFIMMFYYSWQLSIILIV), 253-273 (PIIQLIASLALAFVLYAASFP), and 275-295 (VMDSLTAGTITVVFSSMIALM). Positions 28–310 (IVAGVALILN…LTNVNAQFQR (283 aa)) constitute an ABC transmembrane type-1 domain. The ABC transporter domain maps to 342 to 578 (VEFRNVTFTY…RGVYAQLHKM (237 aa)). ATP is bound at residue 376 to 383 (GRSGSGKS).

Belongs to the ABC transporter superfamily. Lipid exporter (TC 3.A.1.106) family. As to quaternary structure, homodimer.

It is found in the cell inner membrane. It carries out the reaction ATP + H2O + lipid A-core oligosaccharideSide 1 = ADP + phosphate + lipid A-core oligosaccharideSide 2.. Its function is as follows. Involved in lipopolysaccharide (LPS) biosynthesis. Translocates lipid A-core from the inner to the outer leaflet of the inner membrane. Transmembrane domains (TMD) form a pore in the inner membrane and the ATP-binding domain (NBD) is responsible for energy generation. This Escherichia coli O157:H7 protein is ATP-dependent lipid A-core flippase.